Here is a 155-residue protein sequence, read N- to C-terminus: Small ribosomal subunit protein uS7cz/uS7cy (155 aa).

It belongs to the universal ribosomal protein uS7 family. As to quaternary structure, part of the 30S ribosomal subunit.

It is found in the plastid. One of the primary rRNA binding proteins, it binds directly to 16S rRNA where it nucleates assembly of the head domain of the 30S subunit. This chain is Small ribosomal subunit protein uS7cz/uS7cy (rps7-A), found in Cuscuta obtusiflora (Peruvian dodder).